Reading from the N-terminus, the 207-residue chain is Holliday junction branch migration complex subunit RuvA (207 aa).

The interval 1-64 (MIGRLRGNLL…EDAQLLYGFN (64 aa)) is domain I. The domain II stretch occupies residues 65–143 (TKNERALFRE…GWGAGDLFTP (79 aa)). The tract at residues 144–158 (ATDAAPMDDGSEFIT) is flexible linker. Residues 159 to 207 (SPQSAVDEAVSALIALGYKPQQASKTVSQVAKPDMTSEVLIRESLKSMI) form a domain III region.

The protein belongs to the RuvA family. Homotetramer. Forms an RuvA(8)-RuvB(12)-Holliday junction (HJ) complex. HJ DNA is sandwiched between 2 RuvA tetramers; dsDNA enters through RuvA and exits via RuvB. An RuvB hexamer assembles on each DNA strand where it exits the tetramer. Each RuvB hexamer is contacted by two RuvA subunits (via domain III) on 2 adjacent RuvB subunits; this complex drives branch migration. In the full resolvosome a probable DNA-RuvA(4)-RuvB(12)-RuvC(2) complex forms which resolves the HJ.

It localises to the cytoplasm. Functionally, the RuvA-RuvB-RuvC complex processes Holliday junction (HJ) DNA during genetic recombination and DNA repair, while the RuvA-RuvB complex plays an important role in the rescue of blocked DNA replication forks via replication fork reversal (RFR). RuvA specifically binds to HJ cruciform DNA, conferring on it an open structure. The RuvB hexamer acts as an ATP-dependent pump, pulling dsDNA into and through the RuvAB complex. HJ branch migration allows RuvC to scan DNA until it finds its consensus sequence, where it cleaves and resolves the cruciform DNA. This Aliivibrio fischeri (strain MJ11) (Vibrio fischeri) protein is Holliday junction branch migration complex subunit RuvA.